The following is a 234-amino-acid chain: Putative N-acetylmannosamine-6-phosphate 2-epimerase (234 aa).

The protein belongs to the NanE family.

The catalysed reaction is an N-acyl-D-glucosamine 6-phosphate = an N-acyl-D-mannosamine 6-phosphate. It participates in amino-sugar metabolism; N-acetylneuraminate degradation; D-fructose 6-phosphate from N-acetylneuraminate: step 3/5. Converts N-acetylmannosamine-6-phosphate (ManNAc-6-P) to N-acetylglucosamine-6-phosphate (GlcNAc-6-P). In Klebsiella pneumoniae subsp. pneumoniae (strain ATCC 700721 / MGH 78578), this protein is Putative N-acetylmannosamine-6-phosphate 2-epimerase.